The sequence spans 166 residues: NAD(P)H-quinone oxidoreductase subunit I, chloroplastic (166 aa).

2 4Fe-4S ferredoxin-type domains span residues G55–K84 and L95–E124. [4Fe-4S] cluster-binding residues include C64, C67, C70, C74, C104, C107, C110, and C114.

Belongs to the complex I 23 kDa subunit family. As to quaternary structure, NDH is composed of at least 16 different subunits, 5 of which are encoded in the nucleus. It depends on [4Fe-4S] cluster as a cofactor.

The protein resides in the plastid. It is found in the chloroplast thylakoid membrane. It catalyses the reaction a plastoquinone + NADH + (n+1) H(+)(in) = a plastoquinol + NAD(+) + n H(+)(out). It carries out the reaction a plastoquinone + NADPH + (n+1) H(+)(in) = a plastoquinol + NADP(+) + n H(+)(out). Its function is as follows. NDH shuttles electrons from NAD(P)H:plastoquinone, via FMN and iron-sulfur (Fe-S) centers, to quinones in the photosynthetic chain and possibly in a chloroplast respiratory chain. The immediate electron acceptor for the enzyme in this species is believed to be plastoquinone. Couples the redox reaction to proton translocation, and thus conserves the redox energy in a proton gradient. In Sigesbeckia blakei, this protein is NAD(P)H-quinone oxidoreductase subunit I, chloroplastic.